Reading from the N-terminus, the 694-residue chain is Elongation factor G (694 aa).

Residues 6–288 (KLYRNIGIAA…GVIEYLPSPT (283 aa)) enclose the tr-type G domain. GTP-binding positions include 15–22 (AHVDAGKT), 86–90 (DTPGH), and 140–143 (NKMD).

It belongs to the TRAFAC class translation factor GTPase superfamily. Classic translation factor GTPase family. EF-G/EF-2 subfamily.

The protein localises to the cytoplasm. Catalyzes the GTP-dependent ribosomal translocation step during translation elongation. During this step, the ribosome changes from the pre-translocational (PRE) to the post-translocational (POST) state as the newly formed A-site-bound peptidyl-tRNA and P-site-bound deacylated tRNA move to the P and E sites, respectively. Catalyzes the coordinated movement of the two tRNA molecules, the mRNA and conformational changes in the ribosome. The protein is Elongation factor G of Legionella pneumophila subsp. pneumophila (strain Philadelphia 1 / ATCC 33152 / DSM 7513).